A 548-amino-acid polypeptide reads, in one-letter code: ATP synthase subunit alpha (548 aa).

172-179 is a binding site for ATP; sequence GDRKTGKT.

It belongs to the ATPase alpha/beta chains family. F-type ATPases have 2 components, CF(1) - the catalytic core - and CF(0) - the membrane proton channel. CF(1) has five subunits: alpha(3), beta(3), gamma(1), delta(1), epsilon(1). CF(0) has three main subunits: a(1), b(2) and c(9-12). The alpha and beta chains form an alternating ring which encloses part of the gamma chain. CF(1) is attached to CF(0) by a central stalk formed by the gamma and epsilon chains, while a peripheral stalk is formed by the delta and b chains.

The protein resides in the cell membrane. It carries out the reaction ATP + H2O + 4 H(+)(in) = ADP + phosphate + 5 H(+)(out). Its function is as follows. Produces ATP from ADP in the presence of a proton gradient across the membrane. The alpha chain is a regulatory subunit. In Mycobacteroides abscessus (strain ATCC 19977 / DSM 44196 / CCUG 20993 / CIP 104536 / JCM 13569 / NCTC 13031 / TMC 1543 / L948) (Mycobacterium abscessus), this protein is ATP synthase subunit alpha.